The sequence spans 1492 residues: ATP-binding cassette sub-family C member 10 (1492 aa).

Helical transmembrane passes span 32–52, 70–90, 102–122, 133–153, 172–192, 293–313, 320–340, 391–411, and 414–434; these read LVLSALPHALLAVLSACYLGT, LAASFLLSVFPLLDLLPVALP, VLAGCVAAVAWISHSLALWVL, PLALALVALLPAPALVLTVLW, LCLLILQLAALLAYALGWAAP, LVGTMLGFSGPLLLSLLVGFL, LSHGLLYALGLAGGAVLGAVL, LLNFAGSFHEAWGLPLQLAIT, and LLYQQVGVAFVGGLILALLLV. Residues 285–563 form the ABC transmembrane type-1 1 domain; sequence YLALGLLKLV…FPWVINGLLE (279 aa). A Phosphothreonine modification is found at T463. S467 carries the post-translational modification Phosphoserine. 2 consecutive transmembrane segments (helical) span residues 507 to 527 and 538 to 558; these read VYLWAALPVVISIVIFITYVL and FTALALVRMLILPLNNFPWVI. Residues 598–824 enclose the ABC transporter 1 domain; sequence LELHGALFSW…VQAVPKAWAE (227 aa). 633–640 contacts ATP; the sequence is GKVGCGKS. The segment at 825 to 860 is disordered; that stretch reads NGQESDSATAQSVQNPEKTKEGLEEEQSTSGRLLQE. The segment covering 826–840 has biased composition (polar residues); the sequence is GQESDSATAQSVQNP. Transmembrane regions (helical) follow at residues 875–895, 933–953, 974–994, 1051–1071, 1153–1173, and 1182–1202; these read AYWKAVGQGLALAILFSLLLM, LFSPQLLLFSPGNLYIPVFPL, IAGVNSLCTLLRAVLFAAGTL, AGLLGLLAVLGSGLPWLLLLL, IRLQLMGAAVVSAIAGIALVQ, and GLVGLSLSYALSLTGLLSGLV. One can recognise an ABC transmembrane type-1 2 domain in the interval 885 to 1210; sequence ALAILFSLLL…LVSSFTQTEA (326 aa). An ABC transporter 2 domain is found at 1246 to 1479; it reads VEFQDVVLAY…PHSLFQQLLQ (234 aa). 1280-1287 lines the ATP pocket; sequence GRTGSGKS.

Belongs to the ABC transporter superfamily. ABCC family. Conjugate transporter (TC 3.A.1.208) subfamily. In terms of tissue distribution, in testis, localized to peritubular myoid cells, Leydig cells, along the basal membrane of Sertoli cells, moderately in the adluminal compartment of the seminiferous tubules, and in vascular endothelial cells. As to expression, specifically expressed in spleen. Widely expressed.

The protein localises to the cell membrane. The protein resides in the basolateral cell membrane. Its subcellular location is the basal cell membrane. It carries out the reaction ATP + H2O + xenobioticSide 1 = ADP + phosphate + xenobioticSide 2.. The enzyme catalyses an S-substituted glutathione(in) + ATP + H2O = an S-substituted glutathione(out) + ADP + phosphate + H(+). The catalysed reaction is 17beta-estradiol 17-O-(beta-D-glucuronate)(in) + ATP + H2O = 17beta-estradiol 17-O-(beta-D-glucuronate)(out) + ADP + phosphate + H(+). It catalyses the reaction leukotriene C4(in) + ATP + H2O = leukotriene C4(out) + ADP + phosphate + H(+). ATP-dependent transporter of the ATP-binding cassette (ABC) family that actively extrudes physiological compounds, and xenobiotics from cells. Lipophilic anion transporter that mediates ATP-dependent transport of glucuronide conjugates such as estradiol-17-beta-o-glucuronide and GSH conjugates such as leukotriene C4 (LTC4). May contribute to regulate the transport of organic compounds in testes across the blood-testis-barrier. Mediates multidrug resistance (MDR) in cancer cells by preventing the intracellular accumulation of certain antitumor drugs, such as, docetaxel and paclitaxel. Does not transport glycocholic acid, taurocholic acid, MTX, folic acid, cAMP, or cGMP. This chain is ATP-binding cassette sub-family C member 10 (ABCC10), found in Homo sapiens (Human).